Here is a 292-residue protein sequence, read N- to C-terminus: uncharacterized protein (292 aa).

A helical transmembrane segment spans residues 13 to 35 (LFILFIIVVCIYLLPRVAINAFY).

Belongs to the serine esterase family.

The protein localises to the membrane. This is an uncharacterized protein from Salmonella typhimurium (strain LT2 / SGSC1412 / ATCC 700720).